The primary structure comprises 223 residues: Protein phosphatase 1 regulatory subunit 3C (223 aa).

The 106-residue stretch at 104 to 209 folds into the CBM21 domain; that stretch reads REQLTRKLVC…NNDGKNYSLH (106 aa).

In terms of assembly, interacts with PPP1CC catalytic subunit of PP1 and associates with glycogen. Forms complexes with glycogen phosphorylase, glycogen synthase and phosphorylase kinase which is necessary for its regulation of PP1 activity.

In terms of biological role, acts as a glycogen-targeting subunit for PP1 and regulates its activity. Activates glycogen synthase, reduces glycogen phosphorylase activity and limits glycogen breakdown. The sequence is that of Protein phosphatase 1 regulatory subunit 3C from Xenopus tropicalis (Western clawed frog).